Here is a 519-residue protein sequence, read N- to C-terminus: Protein amnionless (519 aa).

The signal sequence occupies residues 1–19 (MGAPGRVLLWLQLCALTRA). Over 20–430 (AYKLWVPNTY…NAPGARSDLM (411 aa)) the chain is Extracellular. 2 N-linked (GlcNAc...) asparagine glycosylation sites follow: Asn35 and Asn39. 6 cysteine pairs are disulfide-bonded: Cys43/Cys152, Cys193/Cys267, Cys259/Cys265, Cys277/Cys303, Cys288/Cys304, and Cys293/Cys307. Residues 67 to 143 (SDMEELQDRK…VLASGAGFSA (77 aa)) form an interaction with CUBN region. In terms of domain architecture, VWFC spans 256-308 (PEACADPSGCVCGNAEVQPWICAALLQPLGGRCPQAACQDALRPEGQCCDLCG). Residues 431–451 (GGLVAALLLLLLVLLVAALLL) traverse the membrane as a helical segment. Topologically, residues 452-519 (RRAGRLRWSR…YGEAEAEAEA (68 aa)) are cytoplasmic.

As to quaternary structure, interacts (via extracellular region) with CUBN/cubilin, giving rise to a huge complex containing one AMN chain and three CUBN chains. N-glycosylated. Post-translationally, a soluble form arises by proteolytic removal of the membrane anchor. As to expression, detected in kidney cortex (at protein level).

The protein localises to the apical cell membrane. It is found in the cell membrane. The protein resides in the endosome membrane. Its subcellular location is the membrane. It localises to the coated pit. Membrane-bound component of the endocytic receptor formed by AMN and CUBN. Required for normal CUBN glycosylation and trafficking to the cell surface. The complex formed by AMN and CUBN is required for efficient absorption of vitamin B12. Required for normal CUBN-mediated protein transport in the kidney. In Sus scrofa (Pig), this protein is Protein amnionless (AMN).